The chain runs to 337 residues: Fructose-1,6-bisphosphatase class 1 (337 aa).

Positions 94, 116, 118, and 119 each coordinate Mg(2+). Substrate contacts are provided by residues 119-122, Asn-210, and Lys-276; that span reads DGSS. Residue Glu-282 coordinates Mg(2+).

The protein belongs to the FBPase class 1 family. Homotetramer. It depends on Mg(2+) as a cofactor.

It localises to the cytoplasm. It catalyses the reaction beta-D-fructose 1,6-bisphosphate + H2O = beta-D-fructose 6-phosphate + phosphate. It participates in carbohydrate biosynthesis; gluconeogenesis. This chain is Fructose-1,6-bisphosphatase class 1, found in Burkholderia lata (strain ATCC 17760 / DSM 23089 / LMG 22485 / NCIMB 9086 / R18194 / 383).